Reading from the N-terminus, the 448-residue chain is Cytoplasmic tRNA 2-thiolation protein 2 (448 aa).

Belongs to the CTU2/NCS2 family.

The protein localises to the cytoplasm. It participates in tRNA modification; 5-methoxycarbonylmethyl-2-thiouridine-tRNA biosynthesis. In terms of biological role, plays a central role in 2-thiolation of mcm(5)S(2)U at tRNA wobble positions of tRNA(Lys), tRNA(Glu) and tRNA(Gln). May act by forming a heterodimer with NCS6 that ligates sulfur from thiocarboxylated URM1 onto the uridine of tRNAs at wobble position. Prior mcm(5) tRNA modification by the elongator complex is required for 2-thiolation. May also be involved in protein urmylation. This is Cytoplasmic tRNA 2-thiolation protein 2 from Scheffersomyces stipitis (strain ATCC 58785 / CBS 6054 / NBRC 10063 / NRRL Y-11545) (Yeast).